The chain runs to 85 residues: Cell division protein ZapA (85 aa).

Positions 59 to 85 (TAVNVVHDYMKLQEKYEILERQLKEKE) form a coiled coil.

It belongs to the ZapA family. Type 2 subfamily. As to quaternary structure, homodimer. Interacts with FtsZ.

It is found in the cytoplasm. Functionally, activator of cell division through the inhibition of FtsZ GTPase activity, therefore promoting FtsZ assembly into bundles of protofilaments necessary for the formation of the division Z ring. It is recruited early at mid-cell but it is not essential for cell division. The chain is Cell division protein ZapA from Bacillus velezensis (strain DSM 23117 / BGSC 10A6 / LMG 26770 / FZB42) (Bacillus amyloliquefaciens subsp. plantarum).